A 432-amino-acid polypeptide reads, in one-letter code: 3-phosphoshikimate 1-carboxyvinyltransferase (432 aa).

Residues Lys-23, Ser-24, and Arg-28 each contribute to the 3-phosphoshikimate site. Lys-23 is a phosphoenolpyruvate binding site. 2 residues coordinate phosphoenolpyruvate: Gly-95 and Arg-123. 4 residues coordinate 3-phosphoshikimate: Ser-167, Gln-169, Asp-317, and Lys-344. Gln-169 contacts phosphoenolpyruvate. Asp-317 functions as the Proton acceptor in the catalytic mechanism. Phosphoenolpyruvate contacts are provided by Arg-348 and Arg-390.

The protein belongs to the EPSP synthase family. As to quaternary structure, monomer.

Its subcellular location is the cytoplasm. The catalysed reaction is 3-phosphoshikimate + phosphoenolpyruvate = 5-O-(1-carboxyvinyl)-3-phosphoshikimate + phosphate. It participates in metabolic intermediate biosynthesis; chorismate biosynthesis; chorismate from D-erythrose 4-phosphate and phosphoenolpyruvate: step 6/7. Catalyzes the transfer of the enolpyruvyl moiety of phosphoenolpyruvate (PEP) to the 5-hydroxyl of shikimate-3-phosphate (S3P) to produce enolpyruvyl shikimate-3-phosphate and inorganic phosphate. The chain is 3-phosphoshikimate 1-carboxyvinyltransferase from Staphylococcus aureus (strain MRSA252).